We begin with the raw amino-acid sequence, 497 residues long: L-arabinose isomerase (497 aa).

Residues Glu306, Glu331, His348, and His447 each contribute to the Mn(2+) site.

It belongs to the arabinose isomerase family. Mn(2+) serves as cofactor.

The enzyme catalyses beta-L-arabinopyranose = L-ribulose. It functions in the pathway carbohydrate degradation; L-arabinose degradation via L-ribulose; D-xylulose 5-phosphate from L-arabinose (bacterial route): step 1/3. In terms of biological role, catalyzes the conversion of L-arabinose to L-ribulose. The chain is L-arabinose isomerase from Halalkalibacterium halodurans (strain ATCC BAA-125 / DSM 18197 / FERM 7344 / JCM 9153 / C-125) (Bacillus halodurans).